The sequence spans 278 residues: MMKTHNLFVSCIESRVQDQGSLYARFHIGTFFRGQALTFGNSIRRALLSEMPGFLMTDVRIQGATHEFAVLPDVEETVLEILLNLKKTVFVPRIPKNQKFETFQGFGFLKNNGPGKVRAADIRLPETVQCVSPEVHIATLTSGAELSLRFNLQFRNFSQLEKREGTFKSKTVAQAKTEDGNVQDTTNELPTLEKNSLFFQQLQNKRNSKDQLFLDTVPMPVQKVNYVIKSLNAKNGSEYIILEIWTDGSLYPQESVEFALRNLTDLFFQFANISKKSN.

The protein belongs to the RNA polymerase alpha chain family. In terms of assembly, in plastids the minimal PEP RNA polymerase catalytic core is composed of four subunits: alpha, beta, beta', and beta''. When a (nuclear-encoded) sigma factor is associated with the core the holoenzyme is formed, which can initiate transcription.

The protein localises to the plastid. Its subcellular location is the chloroplast. It carries out the reaction RNA(n) + a ribonucleoside 5'-triphosphate = RNA(n+1) + diphosphate. Its function is as follows. DNA-dependent RNA polymerase catalyzes the transcription of DNA into RNA using the four ribonucleoside triphosphates as substrates. The polypeptide is DNA-directed RNA polymerase subunit alpha (rpoA) (Chlorella vulgaris (Green alga)).